The chain runs to 436 residues: ATP-dependent RNA helicase RhlB (436 aa).

Residues 9 to 37 carry the Q motif motif; it reads QKFADFPLHKEVHQALNEAGFEFCTPIQA. The Helicase ATP-binding domain occupies 40–219; it reads LPILLEKKDI…YDHMNEPEKV (180 aa). Position 53 to 60 (53 to 60) interacts with ATP; sequence AQTGTGKT. The DEAD box signature appears at 165–168; that stretch reads DEAD. Residues 243–390 enclose the Helicase C-terminal domain; sequence KMPLLLSLLE…VTSYDSDALL (148 aa). Residues 392-436 are disordered; sequence DIPPPVRIHRKPSTHTRNTRDRGASRPQGGQRSGPRRHDRTRRHS. Residues 425–436 are compositionally biased toward basic residues; the sequence is GPRRHDRTRRHS.

This sequence belongs to the DEAD box helicase family. RhlB subfamily. Component of the RNA degradosome, which is a multiprotein complex involved in RNA processing and mRNA degradation.

Its subcellular location is the cytoplasm. It carries out the reaction ATP + H2O = ADP + phosphate + H(+). In terms of biological role, DEAD-box RNA helicase involved in RNA degradation. Has RNA-dependent ATPase activity and unwinds double-stranded RNA. The sequence is that of ATP-dependent RNA helicase RhlB from Shewanella halifaxensis (strain HAW-EB4).